The chain runs to 564 residues: 60 kDa lysophospholipase (564 aa).

In terms of domain architecture, Asparaginase/glutaminase spans 9-355 (RRLLAIYTGG…NDRKKLLAKD (347 aa)). Residue T19 is the Acyl-ester intermediate of the active site. The asparaginase stretch occupies residues 41–350 (TLHMFHDEEY…PGLSLNDRKK (310 aa)). Residues 84–86 (DSS) and 116–117 (TD) each bind substrate. ANK repeat units lie at residues 141–170 (GAQV…YVIP), 396–426 (VLLP…DLNL), 430–459 (SGQT…DVDA), 463–492 (DGQS…RLSP), and 530–559 (DGHC…SVCA). At S478 the chain carries Phosphoserine.

This sequence in the N-terminal section; belongs to the asparaginase 1 family. Monomer.

It carries out the reaction a 1-acyl-sn-glycero-3-phosphocholine + H2O = sn-glycerol 3-phosphocholine + a fatty acid + H(+). It catalyses the reaction L-asparagine + H2O = L-aspartate + NH4(+). The catalysed reaction is a 1-O-alkyl-2-acetyl-sn-glycero-3-phosphocholine + H2O = a 1-O-alkyl-sn-glycero-3-phosphocholine + acetate + H(+). The enzyme catalyses 1-hexadecanoyl-sn-glycero-3-phosphocholine + H2O = sn-glycerol 3-phosphocholine + hexadecanoate + H(+). It carries out the reaction 2 1-hexadecanoyl-sn-glycero-3-phosphocholine = 1,2-dihexadecanoyl-sn-glycero-3-phosphocholine + sn-glycerol 3-phosphocholine. It catalyses the reaction 1-octadecanoyl-sn-glycero-3-phosphocholine + H2O = octadecanoate + sn-glycerol 3-phosphocholine + H(+). The catalysed reaction is 1-(9Z-octadecenoyl)-sn-glycero-3-phosphocholine + H2O = sn-glycerol 3-phosphocholine + (9Z)-octadecenoate + H(+). The enzyme catalyses 1-hexadecanoyl-sn-glycero-3-phosphoethanolamine + H2O = sn-glycero-3-phosphoethanolamine + hexadecanoate + H(+). It carries out the reaction 1-(9Z-octadecenoyl)-sn-glycero-3-phosphoethanolamine + H2O = sn-glycero-3-phosphoethanolamine + (9Z)-octadecenoate + H(+). It catalyses the reaction 1-hexadecanoyl-sn-glycero-3-phosphoethanolamine + 1-hexadecanoyl-sn-glycero-3-phosphocholine = 1,2-dihexadecanoyl-sn-glycero-3-phosphoethanolamine + sn-glycerol 3-phosphocholine. The catalysed reaction is 2-(5Z,8Z,11Z,14Z)-eicosatetraenoyl-sn-glycero-3-phosphocholine + H2O = sn-glycerol 3-phosphocholine + (5Z,8Z,11Z,14Z)-eicosatetraenoate + H(+). The enzyme catalyses 2-hexadecanoyl-sn-glycero-3-phosphocholine + H2O = sn-glycerol 3-phosphocholine + hexadecanoate + H(+). It carries out the reaction 2 2-hexadecanoyl-sn-glycero-3-phosphocholine = 1,2-dihexadecanoyl-sn-glycero-3-phosphocholine + sn-glycerol 3-phosphocholine. It catalyses the reaction 1-O-(9Z)-octadecenoyl-2-O-acetyl-sn-glycero-3-phosphocholine + H2O = 2-acetyl-sn-glycero-3-phosphocholine + (9Z)-octadecenoate + H(+). The catalysed reaction is a 1-acyl-sn-glycero-3-phospho-(1D-myo-inositol) + 1-hexadecanoyl-sn-glycero-3-phosphocholine = a 1-acyl-2-hexadecanoyl-sn-glycero-3-phospho-(1D-myo-inositol) + sn-glycerol 3-phosphocholine. The enzyme catalyses 2 2-(5Z,8Z,11Z,14Z)-eicosatetraenoyl-sn-glycero-3-phosphocholine = 1,2-di-(5Z,8Z,11Z,14Z-eicosatetraenoyl)-sn-glycero-3-phosphocholine + sn-glycerol 3-phosphocholine. In terms of biological role, exhibits lysophospholipase, transacylase, PAF acetylhydrolase and asparaginase activities. Can catalyze three types of transacylation reactions: (1) acyl transfer from 1-acyl-sn-glycero-3-phosphocholine (1-acyl-GPC) to the sn-1(3) positions of glycerol and 2-acylglycerol (sn-1 to -1(3) transfer), (2) acyl transfer from 1-acyl-GPC to the sn-2 positions of 1-acyl-GPC, 1-acyl-sn-glycero-3-phosphoethanolamine (1-acyl-GPE), and other lysophospholipids (sn-1 to -2 transfer) and (3) acyl transfer from 2-acyl-GPC to the sn-1 position of 2-acyl-GPC and 2-acyl-GPE (sn-2 to -1 transfer). Mediates the synthesis of 1-arachidonoyl species of phospholipids by transferring the arachidonoyl residue from 2-arachidonoyl lysophospholipid to the sn-1 position of 2-acyl lysophospholipid. The chain is 60 kDa lysophospholipase (Aspg) from Mus musculus (Mouse).